The following is a 995-amino-acid chain: Pheromone-regulated membrane protein 10 (995 aa).

Disordered regions lie at residues 1 to 217 (MSSH…GEKH), 253 to 299 (GRVL…AVEM), 326 to 407 (DQSF…YIAP), and 425 to 508 (NPQD…NPDQ). Positions 74–88 (SNSSTTNNSTESSGS) are enriched in low complexity. Over residues 110–121 (VKGESGDAHEGS) the composition is skewed to basic and acidic residues. Residues 157–166 (SRGSVGSSSS) are compositionally biased toward low complexity. Positions 170–187 (KGSDDVNEKETNLDHDYD) are enriched in basic and acidic residues. The span at 259 to 269 (GSGGGGGGGLI) shows a compositional bias: gly residues. Positions 283–296 (EEKEVGGGGEDDGA) are enriched in acidic residues. Positions 326–347 (DQSFTYDEPNQSAGSSRNSTAP) are enriched in polar residues. Composition is skewed to basic and acidic residues over residues 359–371 (DDHK…DQGK) and 385–396 (GNDDPEDQHLLL). Residues 495 to 506 (EADDEDEDEENP) show a composition bias toward acidic residues. A run of 10 helical transmembrane segments spans residues 678-698 (VFLY…GGWL), 700-720 (IPVT…VSSM), 726-746 (SVFE…IGSI), 752-772 (FCFS…YIIL), 794-814 (IIYS…FGWV), 833-850 (KYRI…GLIN), 858-878 (PVMM…GKHF), 881-901 (VPEF…NVYS), 906-926 (GMAV…GIAS), and 965-985 (VEVS…VYPF).

It belongs to the ThrE exporter (TC 2.A.79) family.

The protein localises to the membrane. The sequence is that of Pheromone-regulated membrane protein 10 from Pichia sorbitophila (strain ATCC MYA-4447 / BCRC 22081 / CBS 7064 / NBRC 10061 / NRRL Y-12695) (Hybrid yeast).